A 406-amino-acid chain; its full sequence is Odorant receptor 42a (406 aa).

Residues 1 to 44 (MDLRRWFPTLYTQSKDSPVRSRDATLYLLRCVFLMGVRKPPAKF) lie on the Cytoplasmic side of the membrane. A helical transmembrane segment spans residues 45 to 65 (FVAYVLWSFALNFCSTFYQPI). The Extracellular segment spans residues 66–86 (GFLTGYISHLSEFSPGEFLTS). A helical membrane pass occupies residues 87 to 107 (LQVAFNAWSCSTKVLIVWALV). Residues 108–142 (KRFDEANNLLDEMDRRITDPGERLQIHRAVSLSNR) are Cytoplasmic-facing. Residues 143–163 (IFFFFMAVYMVYATNTFLSAI) traverse the membrane as a helical segment. Topologically, residues 164 to 181 (FIGRPPYQNYYPFLDWRS) are extracellular. A helical membrane pass occupies residues 182 to 202 (STLHLALQAGLEYFAMAGACF). The Cytoplasmic segment spans residues 203 to 271 (QDVCVDCYPV…DCLRPVISGT (69 aa)). A helical transmembrane segment spans residues 272–292 (IFVQFLVVGLVLGFTLINIVL). At 293 to 298 (FANLGS) the chain is on the extracellular side. Residues 299–319 (AIAALSFMAAVLLETTPFCIL) traverse the membrane as a helical segment. Over 320–359 (CNYLTEDCYKLADALFQSNWIDEEKRYQKTLMYFLQKLQQ) the chain is Cytoplasmic. A helical transmembrane segment spans residues 360-380 (PITFMAMNVFPISVGTNISVT). At 381–406 (KFSFSVFTLVKQMNISEKLAKSEMEE) the chain is on the extracellular side. Asn-394 is a glycosylation site (N-linked (GlcNAc...) asparagine).

This sequence belongs to the insect chemoreceptor superfamily. Heteromeric odorant receptor channel (TC 1.A.69) family. Or2a subfamily. As to quaternary structure, interacts with Orco. Complexes exist early in the endomembrane system in olfactory sensory neurons (OSNs), coupling these complexes to the conserved ciliary trafficking pathway.

The protein resides in the cell membrane. Odorant receptor which mediates acceptance or avoidance behavior, depending on its substrates. The odorant receptor repertoire encodes a large collection of odor stimuli that vary widely in identity, intensity, and duration. May form a complex with Orco to form odorant-sensing units, providing sensitive and prolonged odorant signaling and calcium permeability. Involved in the behavioral responses to butanol, ethyl acetate, propyl acetate, and pentyl acetate. Also responds to pyrazines. The polypeptide is Odorant receptor 42a (Or42a) (Drosophila melanogaster (Fruit fly)).